The sequence spans 496 residues: MVLAQLGGSISRALQQMSNATIIDEKVLNECLNEITRALLQADVQFKLVRDMSTNIKKIVNLEDLAAGHNKRRIIQQAVYNELCKILDPGKPAFTLKKGKPSVVMFVGLQGSGKTTTCTKYAYHHQKRGWKPALVCADTFRAGAFDQLKQNATKAKIPFYGSSYTESDPVKIAVDGVETFKKENCDLIIVDTSGRHKQEAALFEEMRQVSEAQKPDLVIFVMDSSIGQAAFDQAQAFRQSVAVGAVIVTKMDGHAKGGGALSRVAATKSPVIFIGTGEHMDEFEVFDVKPFVSRLLGMGDLSGLVNKIQDVVPMDQQPELLQKLSEGHFTLRIMYEQFQSMLKMGPLGVFSMLPGFSAEMMPQGREKESQAKFKRYMTMMDSMTDEELDSTNPKILTESRIMRIARGSGRLVHEVMEMLEEYKRLAKIFSKMKGLKIPKKGDMSSLSRNMNAQNMSKVLPPQMLKQIGGMGGLQNLMKQMGSAKDMMGMFGGGGGE.

The segment at 1–296 (MVLAQLGGSI…DVKPFVSRLL (296 aa)) is G-domain. GTP contacts are provided by residues 108-115 (GLQGSGKT), 191-195 (DTSGR), and 249-252 (TKMD). Residues 297–496 (GMGDLSGLVN…MGMFGGGGGE (200 aa)) are M-domain.

This sequence belongs to the GTP-binding SRP family. SRP54 subfamily. As to quaternary structure, component of a signal recognition particle (SRP) complex that consists of a 7SL RNA molecule of 300 nucleotides and six protein subunits: SRP72, SRP68, SRP54, SRP19, SRP14 and SRP9.

Its subcellular location is the cytoplasm. It is found in the endoplasmic reticulum. The enzyme catalyses GTP + H2O = GDP + phosphate + H(+). Component of the signal recognition particle (SRP) complex, a ribonucleoprotein complex that mediates the cotranslational targeting of secretory and membrane proteins to the endoplasmic reticulum (ER). As part of the SRP complex, associates with the SRP receptor (SR) component SRPRA to target secretory proteins to the endoplasmic reticulum membrane. Binds to the signal sequence of presecretory proteins when they emerge from the ribosomes. Displays basal GTPase activity, and stimulates reciprocal GTPase activation of the SR subunit SRPRA. Forms a guanosine 5'-triphosphate (GTP)-dependent complex with the SR subunit SRPRA. SR compaction and GTPase mediated rearrangement of SR drive SRP-mediated cotranslational protein translocation into the ER. Requires the presence of SRP9/SRP14 and/or SRP19 to stably interact with RNA. This Solanum lycopersicum (Tomato) protein is Signal recognition particle subunit SRP54 1.